Here is a 479-residue protein sequence, read N- to C-terminus: uncharacterized protein (479 aa).

8 helical membrane-spanning segments follow: residues 25-45 (VVFV…LFFF), 63-83 (IAMI…LAGG), 110-130 (LFGP…TVIF), 133-153 (GVFN…AGIL), 175-195 (VLSI…VLGI), 229-249 (ILLY…IVWL), 287-307 (LILN…IAFI), and 328-348 (LFAP…LLLL).

The protein in the C-terminal section; belongs to the GatC family.

It is found in the cell membrane. This is an uncharacterized protein from Mycoplasma pneumoniae (strain ATCC 29342 / M129 / Subtype 1) (Mycoplasmoides pneumoniae).